Consider the following 354-residue polypeptide: 3-dehydroquinate synthase (354 aa).

Residues 100–104 (GATGD), 124–125 (TT), K136, K145, and 163–166 (FLKT) contribute to the NAD(+) site. Residues E178, H242, and H256 each contribute to the Zn(2+) site.

Belongs to the sugar phosphate cyclases superfamily. Dehydroquinate synthase family. The cofactor is NAD(+). It depends on Co(2+) as a cofactor. Requires Zn(2+) as cofactor.

The protein localises to the cytoplasm. It catalyses the reaction 7-phospho-2-dehydro-3-deoxy-D-arabino-heptonate = 3-dehydroquinate + phosphate. The protein operates within metabolic intermediate biosynthesis; chorismate biosynthesis; chorismate from D-erythrose 4-phosphate and phosphoenolpyruvate: step 2/7. Its function is as follows. Catalyzes the conversion of 3-deoxy-D-arabino-heptulosonate 7-phosphate (DAHP) to dehydroquinate (DHQ). This chain is 3-dehydroquinate synthase, found in Staphylococcus aureus (strain COL).